Here is a 420-residue protein sequence, read N- to C-terminus: WD repeat-containing protein jip5 (420 aa).

WD repeat units follow at residues 9-48, 72-111, 117-158, 221-262, 271-314, and 318-355; these read PLSADLFSQALHPKEPVVSVGLSSGHVQTFRLPSDEVDSD, RHKGSCRCLGFGVDGEMLYSAGTDGLVKAAKAETGVVENK, DKNG…SKVS, VSSV…DQDE, GGGE…VVSE, and DETEGVVGLGFDVEGRMVSGGGQIVKVWHEAVDSGDGV. Residues 39–63 form a disordered region; sequence RLPSDEVDSDDDGASTSSSRTGRGH. Residues 350 to 420 form a disordered region; sequence DSGDGVNGNE…QAVMAFHDLD (71 aa). The span at 368-387 shows a compositional bias: acidic residues; the sequence is DDSDEDSDDGDDDDDSGDSD. A compositionally biased stretch (basic residues) spans 394–406; it reads DARKKRKKGKTPK.

Belongs to the WD repeat WDR55 family.

The protein resides in the nucleus. Its subcellular location is the nucleolus. This is WD repeat-containing protein jip5 (jip5) from Aspergillus terreus (strain NIH 2624 / FGSC A1156).